The following is a 572-amino-acid chain: MPEDSYIPQAKNDGAFQDLKRRRANDGHTEFSRRDRVHDVQPASIYSNVKENKPAWMRSADENKDKKYDQYGSRVDNGTLQQSLGVAKQVPTASASTTTVSAKVESFSAEKAINTANPPPPSTTTTPSSTTSSSSSFPSSSSLYLKYGNIGLGGRGTDPRMDRVKRNREQLEQSLSIREHLAVEENVNDEGSQPKGDGEVNPYLHLDVANPSVIHTQRDEAHYRTFHSKISDRENRDINSIVRQHYNERTQQSKRQGRRTMSPIYKLRNFNNTIKYILLGNWAKYSSAEGNAPKIFSVLDLCCGKGGDLNKCEFIEIDQYIGIDISDLSVREAFSRYSKQKARFKSHSGARTANKYNFEACFATGDCFTETVPDILEPNFPGIIDQAFPVDAVSIQFALHYAFETEEKVRALLVNVAKSLRVGGTFIGTIPSSDFIRSKIVEKNILKDENGKFKFGNSLYSATFDKEPPADGVFRPAFGNRYTYWLKDAVDNVPEYVVPFETLRALCEEYNMTLRYKKNFIDVFNQEIPKYFSKLNKSLVEGLKRSDGKYGAEGEEKEAVAFYVAFVFEKVT.

Disordered regions lie at residues 1–75 (MPED…GSRV) and 110–140 (EKAI…FPSS). 2 stretches are compositionally biased toward basic and acidic residues: residues 24–39 (ANDG…RVHD) and 59–69 (SADENKDKKYD). Residues 123-140 (TTTTPSSTTSSSSSFPSS) are compositionally biased toward low complexity. An mRNA cap 0 methyltransferase domain is found at 262 to 571 (SPIYKLRNFN…FYVAFVFEKV (310 aa)). 271–272 (NN) contacts mRNA. S-adenosyl-L-methionine contacts are provided by Lys275, Cys302, Asp324, Asp366, Gln396, and Tyr401.

It belongs to the class I-like SAM-binding methyltransferase superfamily. mRNA cap 0 methyltransferase family.

The protein resides in the nucleus. It catalyses the reaction a 5'-end (5'-triphosphoguanosine)-ribonucleoside in mRNA + S-adenosyl-L-methionine = a 5'-end (N(7)-methyl 5'-triphosphoguanosine)-ribonucleoside in mRNA + S-adenosyl-L-homocysteine. In terms of biological role, responsible for methylating the 5'-cap structure of mRNAs. In Lodderomyces elongisporus (strain ATCC 11503 / CBS 2605 / JCM 1781 / NBRC 1676 / NRRL YB-4239) (Yeast), this protein is mRNA cap guanine-N(7) methyltransferase (ABD1).